Reading from the N-terminus, the 300-residue chain is tRNA dimethylallyltransferase (300 aa).

9–16 is a binding site for ATP; it reads GPTASGKT. 11–16 serves as a coordination point for substrate; that stretch reads TASGKT. The tract at residues 34 to 37 is interaction with substrate tRNA; that stretch reads DSQQ.

It belongs to the IPP transferase family. Monomer. Mg(2+) serves as cofactor.

It catalyses the reaction adenosine(37) in tRNA + dimethylallyl diphosphate = N(6)-dimethylallyladenosine(37) in tRNA + diphosphate. Its function is as follows. Catalyzes the transfer of a dimethylallyl group onto the adenine at position 37 in tRNAs that read codons beginning with uridine, leading to the formation of N6-(dimethylallyl)adenosine (i(6)A). In Anaeromyxobacter sp. (strain Fw109-5), this protein is tRNA dimethylallyltransferase.